A 426-amino-acid polypeptide reads, in one-letter code: Mothers against decapentaplegic homolog 7 (426 aa).

Residues 14-42 (WRSRAPGGEDEEEGVGGGGGGGELRGEGA) are disordered. N6-acetyllysine; alternate is present on residues Lys64 and Lys70. Glycyl lysine isopeptide (Lys-Gly) (interchain with G-Cter in ubiquitin); alternate cross-links involve residues Lys64 and Lys70. The MH1 domain maps to 64–207 (KAVRGAKGHH…LSRLCELESP (144 aa)). A compositionally biased stretch (basic residues) spans 67 to 76 (RGAKGHHHPH). The segment at 67 to 87 (RGAKGHHHPHPPTSGAGAAGG) is disordered. Zn(2+) contacts are provided by Cys125, Cys180, Cys192, and His197. The PY-motif signature appears at 208 to 211 (PPPY). The interval 208–217 (PPPYSRYPMD) is important for interaction with SMURF2. A Phosphoserine modification is found at Ser249. The 166-residue stretch at 261-426 (WCVVAYWEEK…CWLEVIFNSR (166 aa)) folds into the MH2 domain.

It belongs to the dwarfin/SMAD family. As to quaternary structure, interacts with COPS5. Interacts with STAMBP. Interacts with PPP1R15A. Interacts with NEDD4L. Interacts with RNF111, AXIN1 and AXIN2. Interacts with ACVR1B, SMURF1, SMURF2 and TGFBR1; SMAD7 recruits SMURF1 and SMURF2 to the TGF-beta receptor and regulates its degradation. Interacts with WWP1. Interacts with PDPK1 (via PH domain). Ubiquitinated by WWP1. Interacts with TSC22D1/TSC-22; the interaction requires TGF-beta and the interaction is inhibited by TGFBR1. In terms of processing, phosphorylation on Ser-249 does not affect its stability, nuclear localization or inhibitory function in TGFB signaling; however it affects its ability to regulate transcription. Phosphorylated by PDPK1. Ubiquitinated by WWP1. Polyubiquitinated by RNF111, which is enhanced by AXIN1 and promotes proteasomal degradation. In response to TGF-beta, ubiquitinated by SMURF1; which promotes its degradation. Ubiquitinated by ARK2C, promoting proteasomal degradation, leading to enhance the BMP-Smad signaling. Post-translationally, acetylation prevents ubiquitination and degradation mediated by SMURF1. Ubiquitous in various organs, with higher levels in brain and kidney.

The protein resides in the nucleus. The protein localises to the cytoplasm. Functionally, antagonist of signaling by TGF-beta (transforming growth factor) type 1 receptor superfamily members; has been shown to inhibit TGF-beta (Transforming growth factor) and activin signaling by associating with their receptors thus preventing SMAD2 access. Functions as an adapter to recruit SMURF2 to the TGF-beta receptor complex. Also acts by recruiting the PPP1R15A-PP1 complex to TGFBR1, which promotes its dephosphorylation. Positively regulates PDPK1 kinase activity by stimulating its dissociation from the 14-3-3 protein YWHAQ which acts as a negative regulator. The chain is Mothers against decapentaplegic homolog 7 (Smad7) from Mus musculus (Mouse).